A 313-amino-acid chain; its full sequence is Malate dehydrogenase (313 aa).

Residues 11-16 (GAGSIG) and Asp35 each bind NAD(+). Positions 84 and 90 each coordinate substrate. NAD(+)-binding positions include Asn97 and 120-122 (VTN). 2 residues coordinate substrate: Asn122 and Arg153. The active-site Proton acceptor is the His177.

The protein belongs to the LDH/MDH superfamily. MDH type 3 family.

It carries out the reaction (S)-malate + NAD(+) = oxaloacetate + NADH + H(+). Catalyzes the reversible oxidation of malate to oxaloacetate. The sequence is that of Malate dehydrogenase from Ehrlichia chaffeensis (strain ATCC CRL-10679 / Arkansas).